The following is a 223-amino-acid chain: Receptor-transporting protein 2 (223 aa).

The Cytoplasmic segment spans residues 1-193; it reads MSTSLTTCEW…KKGQAGFISS (193 aa). A 3CxxC-type zinc finger spans residues 52 to 161; the sequence is ASGRFHCSWC…SEFCEACQEG (110 aa). Residues 194–216 form a helical membrane-spanning segment; that stretch reads FFSFRWCLFWGTLCLVIVYLQFF. Residues 217–223 lie on the Extracellular side of the membrane; the sequence is RGRSGFL.

This sequence belongs to the TMEM7 family. As to quaternary structure, interacts with olfactory receptors. Predominantly expressed in olfactory and vomeronasal organs, in mature olfactory sensory neurons.

The protein localises to the cell membrane. Specifically promotes functional cell surface expression of olfactory receptors, but not of other GPCRs. The sequence is that of Receptor-transporting protein 2 (Rtp2) from Mus musculus (Mouse).